Reading from the N-terminus, the 81-residue chain is Adipogenin (81 aa).

The chain crosses the membrane as a helical span at residues Phe16–Leu36.

The protein belongs to the adipogenin family.

It is found in the membrane. The protein localises to the nucleus. In terms of biological role, plays a role in stimulating adipocyte differentiation and development. In Sus scrofa (Pig), this protein is Adipogenin.